Consider the following 504-residue polypeptide: Histidine ammonia-lyase (504 aa).

The 5-imidazolinone (Ala-Gly) cross-link spans 141-143 (ASG). Ser-142 bears the 2,3-didehydroalanine (Ser) mark.

The protein belongs to the PAL/histidase family. Post-translationally, contains an active site 4-methylidene-imidazol-5-one (MIO), which is formed autocatalytically by cyclization and dehydration of residues Ala-Ser-Gly.

The protein resides in the cytoplasm. It carries out the reaction L-histidine = trans-urocanate + NH4(+). It participates in amino-acid degradation; L-histidine degradation into L-glutamate; N-formimidoyl-L-glutamate from L-histidine: step 1/3. The polypeptide is Histidine ammonia-lyase (Geobacillus thermodenitrificans (strain NG80-2)).